Reading from the N-terminus, the 1167-residue chain is C5a peptidase (1167 aa).

An N-terminal signal peptide occupies residues 1–31 (MRKKQKLPFDKLAIALMSTSILLNAQSDIKA). The span at 34–52 (VTEDTPVTEQAVETPQPTA) shows a compositional bias: polar residues. Residues 34 to 73 (VTEDTPVTEQAVETPQPTAVSEEVPSSKETKTPQTPDDAE) form a disordered region. The Peptidase S8 domain occupies 99–581 (KATIRDLNDP…AGAVDAKKAS (483 aa)). Active-site charge relay system residues include Asp-130, His-193, and Ser-512. A disordered region spans residues 1029–1133 (EGHSNKPEQD…RDQLPTTNDK (105 aa)). Tandem repeats lie at residues 1034–1050 (KPEQ…KPEA), 1051–1067 (KPEQ…KPEA), 1068–1084 (KPEQ…KPET), and 1085–1101 (KPEK…TPQK). The tract at residues 1034–1101 (KPEQDGSGQT…GQTPGKTPQK (68 aa)) is 4 X 17 AA tandem repeats. Composition is skewed to basic and acidic residues over residues 1044–1071 (PDKK…KPEQ) and 1078–1090 (PDKK…EKDS). 2 stretches are compositionally biased toward polar residues: residues 1092–1106 (GQTP…QPSR) and 1120–1130 (KASTRDQLPTT). The short motif at 1127–1131 (LPTTN) is the LPXTG sorting signal element. Pentaglycyl murein peptidoglycan amidated threonine is present on Thr-1130. Residues 1131–1167 (NDKDTNRLHLLKLVMTTFFFGLVAHIFKTKRQKETKK) constitute a propeptide, removed by sortase.

The protein belongs to the peptidase S8 family. Post-translationally, cleaved by SpeB protease; leading to its degradation. Degradation by SpeB is probably strictly regulated to preserve integrity of C5a peptidase.

Its subcellular location is the secreted. The protein localises to the cell wall. The enzyme catalyses The primary cleavage site is at 67-His-|-Lys-68 in human C5a with a minor secondary cleavage site at 58-Ala-|-Ser-59.. This virulence factor of S.pyogenes specifically cleaves the human serum chemotaxin C5a at '68-Lys-|-Asp-69' bond near its C-terminus, destroying its ability to serve as a chemoattractant. This chain is C5a peptidase (scpA), found in Streptococcus pyogenes.